The sequence spans 463 residues: tRNA (guanine(10)-N(2))-methyltransferase TRMT11 (463 aa).

Ala2 is modified (N-acetylalanine).

Belongs to the class I-like SAM-binding methyltransferase superfamily. TRM11 methyltransferase family. As to quaternary structure, part of the heterodimeric TRMT11-TRM112 methyltransferase complex; this complex forms an active tRNA methyltransferase, where TRMT112 acts as an activator of the catalytic subunit TRMT11.

Its subcellular location is the cytoplasm. The catalysed reaction is guanosine(10) in tRNA + S-adenosyl-L-methionine = N(2)-methylguanosine(10) in tRNA + S-adenosyl-L-homocysteine + H(+). Catalytic subunit of the TRMT11-TRM112 methyltransferase complex, that specifically mediates the S-adenosyl-L-methionine-dependent N(2)-methylation of guanosine nucleotide at position 10 (m2G10) in tRNAs. This is one of the major tRNA (guanine-N(2))-methyltransferases. The polypeptide is tRNA (guanine(10)-N(2))-methyltransferase TRMT11 (Pongo abelii (Sumatran orangutan)).